Consider the following 247-residue polypeptide: Mannose-specific lectin CML-2 (247 aa).

A carbohydrate is bound by residues D87 and G107. N119 carries N-linked (GlcNAc...) asparagine glycosylation. 2 residues coordinate Mn(2+): E129 and D131. Ca(2+)-binding residues include D131 and F133. A carbohydrate contacts are provided by S138 and N139. Ca(2+)-binding residues include N139 and D142. Mn(2+) contacts are provided by D142 and H147. 3 residues coordinate a carbohydrate: G221, E222, and Q223.

It belongs to the leguminous lectin family. In terms of assembly, homodimer; non-covalently linked. In terms of processing, glycosylated.

In terms of biological role, mannose-specific lectin. Also binds alpha-methyl-D-mannoside, D-glucose, N-acetyl-D-glucosamine and sucrose but not D-galactose, D-arabinose, D-fructose, D-xylose, lactose or glycoproteins fetiun, PSM and ovalbumin. Shows agglutinating activity towards rabbit erythrocytes. The sequence is that of Mannose-specific lectin CML-2 from Centrolobium microchaete (Canarywood tree).